Reading from the N-terminus, the 1065-residue chain is Inversin (1065 aa).

16 ANK repeats span residues 13 to 42 (SLAS…ALKD), 47 to 76 (FGRT…DVNK), 80 to 110 (SQRT…WMQK), 113 to 144 (EEMT…EVDT), 148 to 177 (NKQT…NIGI), 181 to 213 (EGKI…TESL), 220 to 250 (EGRT…NITS), 254 to 283 (LFRT…SGTI), 288 to 317 (QGAT…VKDD), 321 to 350 (EGRT…DIDI), 356 to 385 (YGGT…QVDA), 389 to 418 (MKHT…RVDL), 422 to 451 (DGHS…NPNV), 455 to 484 (AGRT…DPNI), 488 to 517 (EGRT…FPNQ), and 523 to 553 (ERYT…SIAA). The residue at position 75 (Asn-75) is a 3-hydroxyasparagine. Residues 490-498 (RTALHWSCN) carry the D-box 1 motif. The 30-residue stretch at 555–584 (QDIAAFKIQAVYKGYKVRKAFRDRKNLLMK) folds into the IQ 1 domain. The segment covering 589–616 (RKDAAAKKREEENKRKEAEQQKGRRSPD) has biased composition (basic and acidic residues). 2 disordered regions span residues 589 to 833 (RKDA…TPRN) and 847 to 886 (HLPQ…PLSG). Polar residues predominate over residues 627–640 (PSTQDVPSRQSRAP). At Ser-661 the chain carries Phosphoserine. Positions 677–686 (SSDLQGTNSR) are enriched in polar residues. Basic and acidic residues-rich tracts occupy residues 687 to 697 (RPNETAREHSK), 706 to 715 (RPNEGSDGSR), 723 to 736 (EKSR…ERCA), 752 to 762 (GPDEKGEDSRR), 770 to 786 (HDSH…EPKA), and 853 to 863 (EELRSGARRLE). Residues 909–917 (RKELFRKKN) carry the D-box 2 motif. One can recognise an IQ 2 domain in the interval 916–945 (KNKAAAVIQRAWRSYQLRKHLSHLRHMKQL). The interval 976-999 (TTAVSKAPKSPSKGTSGTKSTKHS) is disordered. Residues 983 to 994 (PKSPSKGTSGTK) show a composition bias toward low complexity.

Binds calmodulin via its IQ domains. Interacts with APC2. Interacts with alpha-, beta-, and gamma-catenin. Interacts with N-cadherin (CDH2). Interacts with microtubules. Interacts with NPHP1. Interacts with DVL1, PRICKLE (PRICKLE1 or PRICKLE2) and Strabismus (VANGL1 or VANGL2). Interacts with IQCB1; the interaction likely requires additional interactors. Component of a complex containing at least ANKS6, INVS, NEK8 and NPHP3. ANKS6 may organize complex assembly by linking INVS and NPHP3 to NEK8 and INVS may target the complex to the proximal ciliary axoneme. In terms of processing, may be ubiquitinated via its interaction with APC2. Post-translationally, hydroxylated at Asn-75, most probably by HIF1AN. As to expression, widely expressed. Strongly expressed in the primary cilia of renal tubular cells.

It is found in the cytoplasm. The protein localises to the cytoskeleton. The protein resides in the spindle. It localises to the membrane. Its subcellular location is the nucleus. It is found in the cell projection. The protein localises to the cilium. Required for normal renal development and establishment of left-right axis. Probably acts as a molecular switch between different Wnt signaling pathways. Inhibits the canonical Wnt pathway by targeting cytoplasmic disheveled (DVL1) for degradation by the ubiquitin-proteasome. This suggests that it is required in renal development to oppose the repression of terminal differentiation of tubular epithelial cells by Wnt signaling. Involved in the organization of apical junctions in kidney cells together with NPHP1, NPHP4 and RPGRIP1L/NPHP8. Does not seem to be strictly required for ciliogenesis. This chain is Inversin (INVS), found in Homo sapiens (Human).